We begin with the raw amino-acid sequence, 1140 residues long: Protein shank (1140 aa).

ANK repeat units lie at residues 144–174, 178–207, 211–242, 246–275, 279–309, and 312–341; these read QGET…HVDF, EGQT…SPNY, IGLT…DIGV, HGNH…QIDA, NGNS…HLAV, and QGQT…KSSV. A disordered region spans residues 337-412; that stretch reads PKSSVPYRGT…ITPSEYGTMR (76 aa). Residues 351 to 364 show a composition bias toward basic residues; that stretch reads TRRRLSSTITRRRS. The span at 388–412 shows a compositional bias: low complexity; that stretch reads SAAPSPSPSRSSRTTITPSEYGTMR. Positions 436–529 constitute a PDZ domain; sequence ILVIPRGVKG…TITLKVITVD (94 aa). 2 stretches are compositionally biased toward polar residues: residues 640–657 and 687–704; these read DQES…NSVS and TSTF…QLSR. Disordered stretches follow at residues 640 to 673, 687 to 856, 875 to 902, 961 to 993, and 1008 to 1028; these read DQES…ASSA, TSTF…AASA, QLKK…STTD, KDSG…HSPN, and YGQK…SSTV. Composition is skewed to low complexity over residues 761–775 and 784–793; these read QHQN…QQHP and PQPIQQQQSS. Pro residues-rich tracts occupy residues 794–806 and 823–847; these read IPPP…PPHC and VPPP…PPPG. The segment covering 964–974 has biased composition (polar residues); that stretch reads GYTSSRTSLEP. Residues 977-988 are compositionally biased toward basic and acidic residues; that stretch reads SEEKDHRPHFSL. The span at 1015 to 1028 shows a compositional bias: low complexity; sequence SVASSSTASSSSTV. The 63-residue stretch at 1078-1140 folds into the SAM domain; it reads WSVDDVIGWL…IESALRGLLQ (63 aa).

This sequence belongs to the SHANK family. As to quaternary structure, interacts (via PDZ domain) with egl-19 (via C-terminus). As to expression, expressed in the pharynx, pharyngeal-intestinal valve, intestine, rectal epithelial cells, tail neurons, nerve cord and sperm.

It localises to the cell projection. Its subcellular location is the pseudopodium. It is found in the cytoplasmic vesicle. The protein localises to the postsynaptic density. Functionally, scaffold protein that most likely acts in the postsynaptic density (PSD) of excitatory synapses which orchestrates synapse formation and maintenance at neuromuscular junctions. Associates with and trafficks the L-type calcium channel egl-19 to the cell surface of body wall muscles to ensure the function of the calcium channel and therefore maintain the Ca(2+) current density. The maintenance of Ca(2+) also allows for the downstream regulation of Ca(2+)-induced expression of genes such as gem-4. Plays a role in the regulation of the defecation cycle, and this may be in association with the inositol trisphosphate (IP3) receptor itr-1, which in turn mediates periodic calcium release and muscle contractions. Required for normal fertility and pharyngeal pumping. The protein is Protein shank of Caenorhabditis elegans.